Consider the following 368-residue polypeptide: Aminomethyltransferase (368 aa).

The protein belongs to the GcvT family. As to quaternary structure, the glycine cleavage system is composed of four proteins: P, T, L and H.

It catalyses the reaction N(6)-[(R)-S(8)-aminomethyldihydrolipoyl]-L-lysyl-[protein] + (6S)-5,6,7,8-tetrahydrofolate = N(6)-[(R)-dihydrolipoyl]-L-lysyl-[protein] + (6R)-5,10-methylene-5,6,7,8-tetrahydrofolate + NH4(+). Its function is as follows. The glycine cleavage system catalyzes the degradation of glycine. The chain is Aminomethyltransferase from Alkaliphilus oremlandii (strain OhILAs) (Clostridium oremlandii (strain OhILAs)).